The following is a 640-amino-acid chain: Threonine--tRNA ligase (640 aa).

One can recognise a TGS domain in the interval 1 to 61 (MPIITLPDGS…ERDATLQIIT (61 aa)). Residues 242–533 (DHRRIGKQLD…LIEHYAGAFP (292 aa)) are catalytic. Cys333, His384, and His510 together coordinate Zn(2+).

This sequence belongs to the class-II aminoacyl-tRNA synthetase family. Homodimer. It depends on Zn(2+) as a cofactor.

It is found in the cytoplasm. The catalysed reaction is tRNA(Thr) + L-threonine + ATP = L-threonyl-tRNA(Thr) + AMP + diphosphate + H(+). Its function is as follows. Catalyzes the attachment of threonine to tRNA(Thr) in a two-step reaction: L-threonine is first activated by ATP to form Thr-AMP and then transferred to the acceptor end of tRNA(Thr). Also edits incorrectly charged L-seryl-tRNA(Thr). The sequence is that of Threonine--tRNA ligase from Pseudomonas paraeruginosa (strain DSM 24068 / PA7) (Pseudomonas aeruginosa (strain PA7)).